A 617-amino-acid polypeptide reads, in one-letter code: Electron transfer flavoprotein-ubiquinone oxidoreductase, mitochondrial (617 aa).

A mitochondrion-targeting transit peptide spans 1 to 33 (MQVLLARLACPVYQCFHAIKIKKNYLPLCATRW). Residue 71–85 (VVIVGAGPAGLSAAA) coordinates FAD. Lysine 96 carries the post-translational modification N6-acetyllysine. The stretch at 109-130 (IGAHTLSGACLDPRALQELFPD) is an intramembrane region. An N6-acetyllysine mark is found at lysine 132 and lysine 223. A ubiquinone contacts are provided by glycine 305 and glycine 306. N6-acetyllysine is present on lysine 357. An intramembrane segment occupies 428–447 (IGLDVTEYEDNLKKSWVWKE). Serine 551 carries the phosphoserine modification. [4Fe-4S] cluster is bound by residues cysteine 561, cysteine 586, cysteine 589, and cysteine 592. One can recognise a 4Fe-4S ferredoxin-type domain in the interval 577–606 (FRLQINAQNCVHCKTCDIKDPSQNINWVVP).

This sequence belongs to the ETF-QO/FixC family. In terms of assembly, monomer. [4Fe-4S] cluster is required as a cofactor. It depends on FAD as a cofactor.

It is found in the mitochondrion inner membrane. The enzyme catalyses a ubiquinone + reduced [electron-transfer flavoprotein] = a ubiquinol + oxidized [electron-transfer flavoprotein] + H(+). Accepts electrons from ETF and reduces ubiquinone. This is Electron transfer flavoprotein-ubiquinone oxidoreductase, mitochondrial (ETFDH) from Bos taurus (Bovine).